We begin with the raw amino-acid sequence, 324 residues long: NADH-cytochrome b5 reductase 1 (324 aa).

The helical transmembrane segment at 49 to 69 (LNIVLAFVVGLIGSVVVLLYF) threads the bilayer. An FAD-binding FR-type domain is found at 81 to 184 (TQWQQYRLME…KGPKGQMRYA (104 aa)). FAD-binding positions include 164–179 (GSMKIGDLLSVKGPKG) and 190–222 (HIGMIAGGTGLTPCLQIIRAALKNPADKTQIDF).

Belongs to the flavoprotein pyridine nucleotide cytochrome reductase family. Monomer. Component of the 2-(3-amino-3-carboxypropyl)histidine synthase complex composed of DPH1, DPH2, DPH3 and a NADH-dependent reductase, predominantly CBR1. The cofactor is FAD.

Its subcellular location is the mitochondrion outer membrane. The enzyme catalyses 2 Fe(III)-[cytochrome b5] + NADH = 2 Fe(II)-[cytochrome b5] + NAD(+) + H(+). It catalyses the reaction 2 Fe(3+)-[Dph3] + NADH = 2 Fe(2+)-[Dph3] + NAD(+) + H(+). It functions in the pathway protein modification; peptidyl-diphthamide biosynthesis. Functionally, NADH-dependent reductase for DPH3 and cytochrome b5. Required for the first step of diphthamide biosynthesis, a post-translational modification of histidine which occurs in elongation factor 2. DPH1 and DPH2 transfer a 3-amino-3-carboxypropyl (ACP) group from S-adenosyl-L-methionine (SAM) to a histidine residue, the reaction is assisted by a reduction system comprising DPH3 and a NADH-dependent reductase, predominantly CBR1. By reducing DPH3, also involved in the formation of the tRNA wobble base modification mcm5s 2U (5-methoxycarbonylmethyl-2-thiouridine), mediated by the elongator complex. The cytochrome b5/NADH cytochrome b5 reductase electron transfer system supports the catalytic activity of several sterol biosynthetic enzymes. The protein is NADH-cytochrome b5 reductase 1 (CBR1) of Mycosarcoma maydis (Corn smut fungus).